We begin with the raw amino-acid sequence, 401 residues long: Tryptophan synthase beta chain (401 aa).

Residue lysine 91 is modified to N6-(pyridoxal phosphate)lysine.

The protein belongs to the TrpB family. Tetramer of two alpha and two beta chains. The cofactor is pyridoxal 5'-phosphate.

The catalysed reaction is (1S,2R)-1-C-(indol-3-yl)glycerol 3-phosphate + L-serine = D-glyceraldehyde 3-phosphate + L-tryptophan + H2O. It functions in the pathway amino-acid biosynthesis; L-tryptophan biosynthesis; L-tryptophan from chorismate: step 5/5. In terms of biological role, the beta subunit is responsible for the synthesis of L-tryptophan from indole and L-serine. The protein is Tryptophan synthase beta chain of Lactococcus lactis subsp. cremoris (strain SK11).